The following is a 2151-amino-acid chain: Calpain-type cysteine protease DEK1 (2151 aa).

The N-terminal stretch at 1-32 (MEGDERGVLLACVISGTLFTVFGSGSFWILWA) is a signal peptide. The Extracellular portion of the chain corresponds to 33 to 69 (VNWRPWRLYSWIFARKWPKVLQGPQLDILCGVLSLFA). A helical transmembrane segment spans residues 70–90 (WIVVVSPIAILIGWGSWLIVI). Over 91-94 (LDRH) the chain is Cytoplasmic. A helical membrane pass occupies residues 95–115 (IIGLAIIMAGTALLLAFYSIM). Residues 116-126 (LWWRTQWQSSR) are Extracellular-facing. Residues 127–147 (AVALLLLLGVALLCAYELCAV) form a helical membrane-spanning segment. Residues 148 to 163 (YVTAGAHASQQYSPSG) are Cytoplasmic-facing. A helical membrane pass occupies residues 164–184 (FFFGVSAIALAINMLFICRMV). The Extracellular segment spans residues 185 to 235 (FNGNGLDVDEYVRRAYKFAYSDCIEVGPVACLPEPPDPNELYPRQTSRASH). A helical transmembrane segment spans residues 236-256 (LGLLYLGSLVVLLAYSVLYGL). At 257–263 (TARESRW) the chain is on the cytoplasmic side. Residues 264–284 (LGGITSAAVIVLDWNIGACLY) form a helical membrane-spanning segment. The Extracellular portion of the chain corresponds to 285–293 (GFKLLQNRV). Residues 294–314 (LALFVAGISRLFLICFGIHYW) traverse the membrane as a helical segment. At 315–319 (YLGHC) the chain is on the cytoplasmic side. A helical transmembrane segment spans residues 320–340 (ISYIFVASVLSGAAVSRHLSI). Residues 341–615 (TDPSAARRDA…LLLHHVAGTP (275 aa)) lie on the Extracellular side of the membrane. Disordered stretches follow at residues 363-393 (RRKE…GHTG) and 405-442 (CTAD…SCRS). Positions 369–388 (SSSSSSDGCGSSIKRSSSID) are enriched in low complexity. A compositionally biased stretch (polar residues) spans 405-420 (CTADNLTRTGSSQEGI). A compositionally biased stretch (low complexity) spans 430–442 (RPSLGLRSSSCRS). The helical transmembrane segment at 616-636 (ERAWGLFSLVFILETIIVAIF) threads the bilayer. Topologically, residues 637–652 (RPKTITIINSSHQQFE) are cytoplasmic. A helical membrane pass occupies residues 653-673 (FGFSVLLLSPVVCSIMAFLRS). Over 674 to 686 (LQVEEMALTSKSR) the chain is Extracellular. A helical transmembrane segment spans residues 687 to 707 (KYGFVAWLLSTSVGLSLSFLS). At 708 to 711 (KSSV) the chain is on the cytoplasmic side. A helical transmembrane segment spans residues 712–732 (LLGISLTVPLMAACLSIAVPI). Residues 733-760 (WMHNGYQFWVPQLSCGDQARDLRSPRIK) lie on the Extracellular side of the membrane. Residues 761–782 (GFILWICVVLFAGSVISLGAII) traverse the membrane as a helical segment. Residues 783–813 (SAKPLDDLKYKLFSARENNVTSPYTSSVYLG) are Cytoplasmic-facing. A helical membrane pass occupies residues 814–834 (WAMSSGIALVVTAILPIVSWF). The Extracellular portion of the chain corresponds to 835–844 (ATYRFSHSSA). Residues 845–865 (VCLMIFSVVLVAFCGTSYLEV) form a helical membrane-spanning segment. At 866 to 878 (VKSRDDQLPTKGD) the chain is on the cytoplasmic side. Residues 879 to 899 (FLAALLPLACIPALLSLCCGM) form a helical membrane-spanning segment. At 900 to 912 (VKWKDDCWILSRG) the chain is on the extracellular side. Residues 913–933 (VYVFFSIGLLLLFGAIAAVIA) traverse the membrane as a helical segment. At 934-936 (VKP) the chain is on the cytoplasmic side. The helical transmembrane segment at 937–957 (WTIGVSFLLVLFLMVVTIGVI) threads the bilayer. The Extracellular segment spans residues 958–971 (HLWASNNFYLTRKQ). Residues 972-992 (TSFVCFLALLLGLAAFLLGWH) form a helical membrane-spanning segment. At 993–1006 (QDKAFAGASVGYFT) the chain is on the cytoplasmic side. The chain crosses the membrane as a helical span at residues 1007-1027 (FLSLLAGRALAVLLSPPIVVY). Residues 1028 to 1050 (SPRVLPVYVYDAHADCGKNVSAA) lie on the Extracellular side of the membrane. Residues 1051 to 1071 (FLVLYGIALATEGWGVVASLI) traverse the membrane as a helical segment. Over 1072-2151 (IYPPFAGAAV…TKASIVLEAL (1080 aa)) the chain is Cytoplasmic. Calpain catalytic domains lie at 1407 to 1600 (SGKH…DMID) and 1695 to 1997 (QFTD…CRVY). Catalysis depends on residues cysteine 1761, histidine 1919, and asparagine 1939.

It belongs to the peptidase C2 family. In terms of processing, autocatalytic proteolytic cleavage leading to the production of mainly cytoplasmic localized subproducts of about 85 and 120 kDa. As to expression, mostly expressed in meristems and organ primordia. Expressed at low levels in young and germinating seeds at 10 ppm and in seedling roots at 67 ppm. Present in most tissues at a low level.

The protein resides in the cell membrane. The protein localises to the endosome membrane. Its subcellular location is the endoplasmic reticulum membrane. It is found in the cytoplasm. In terms of biological role, essential protease involved in epiderm development. Required for aleurone cell development in the endosperm probably by maintaining and restricting the aleurone and embryonic epidermal L1 cell-layer fates as well as meristems organization. Involved in the maintenance of adaxial/abaxial axis information in developing leaves, probably by regulating cell proliferation and expansion. Does not need calcium ions to be active. Required for the formation of giant cells in sepals by determining cell fate and promoting endoreplication. The sequence is that of Calpain-type cysteine protease DEK1 from Arabidopsis thaliana (Mouse-ear cress).